The following is a 166-amino-acid chain: MSDEDHDFSHQGGGDNASKTYPLPAGALKKGGYVCINGRPCKVIDLSVSKTGKHGHAKVSIVATDIFTGNRLEDQAPSTHNVEVPFVKTFTYSVLDIQPNEDPSLPSHLSLMDDEGESREDLDMPPDVALATQIKEQFDSGKEVLVVVVSAMGTEQVLQTKNAAEK.

A disordered region spans residues 1–21 (MSDEDHDFSHQGGGDNASKTY). Lys-53 carries the hypusine modification. Residues 101–121 (EDPSLPSHLSLMDDEGESRED) are disordered. Positions 112–121 (MDDEGESRED) are enriched in acidic residues.

This sequence belongs to the eIF-5A family. Lys-53 undergoes hypusination, a unique post-translational modification that consists in the addition of a butylamino group from spermidine to lysine side chain, leading to the formation of the unusual amino acid hypusine. eIF-5As are the only known proteins to undergo this modification, which is essential for their function.

It localises to the cytoplasm. In terms of biological role, translation factor that promotes translation elongation and termination, particularly upon ribosome stalling at specific amino acid sequence contexts. Binds between the exit (E) and peptidyl (P) site of the ribosome and promotes rescue of stalled ribosome: specifically required for efficient translation of polyproline-containing peptides as well as other motifs that stall the ribosome. Acts as a ribosome quality control (RQC) cofactor by joining the RQC complex to facilitate peptidyl transfer during CAT tailing step. This chain is Eukaryotic translation initiation factor 5A, found in Leishmania donovani.